The sequence spans 109 residues: Nucleoid-associated protein Sbal223_1770 (109 aa).

It belongs to the YbaB/EbfC family. As to quaternary structure, homodimer.

It localises to the cytoplasm. Its subcellular location is the nucleoid. Its function is as follows. Binds to DNA and alters its conformation. May be involved in regulation of gene expression, nucleoid organization and DNA protection. The protein is Nucleoid-associated protein Sbal223_1770 of Shewanella baltica (strain OS223).